Here is a 122-residue protein sequence, read N- to C-terminus: Protein translocase subunit SecE (122 aa).

The next 3 helical transmembrane spans lie at 14–34, 38–58, and 93–113; these read LLKW…NQYF, PILY…FLAL, and LIVV…DSLL.

The protein belongs to the SecE/SEC61-gamma family. In terms of assembly, component of the Sec protein translocase complex. Heterotrimer consisting of SecY, SecE and SecG subunits. The heterotrimers can form oligomers, although 1 heterotrimer is thought to be able to translocate proteins. Interacts with the ribosome. Interacts with SecDF, and other proteins may be involved. Interacts with SecA.

It is found in the cell inner membrane. Functionally, essential subunit of the Sec protein translocation channel SecYEG. Clamps together the 2 halves of SecY. May contact the channel plug during translocation. This is Protein translocase subunit SecE from Pseudomonas aeruginosa (strain ATCC 15692 / DSM 22644 / CIP 104116 / JCM 14847 / LMG 12228 / 1C / PRS 101 / PAO1).